We begin with the raw amino-acid sequence, 247 residues long: UDP-2,3-diacylglucosamine hydrolase (247 aa).

Aspartate 8, histidine 10, aspartate 41, asparagine 79, and histidine 114 together coordinate Mn(2+). 79-80 (NR) contacts substrate. Positions 122, 160, 171, 174, and 202 each coordinate substrate. The Mn(2+) site is built by histidine 202 and histidine 204.

The protein belongs to the LpxH family. Mn(2+) is required as a cofactor.

It localises to the cell inner membrane. It carries out the reaction UDP-2-N,3-O-bis[(3R)-3-hydroxytetradecanoyl]-alpha-D-glucosamine + H2O = 2-N,3-O-bis[(3R)-3-hydroxytetradecanoyl]-alpha-D-glucosaminyl 1-phosphate + UMP + 2 H(+). Its pathway is glycolipid biosynthesis; lipid IV(A) biosynthesis; lipid IV(A) from (3R)-3-hydroxytetradecanoyl-[acyl-carrier-protein] and UDP-N-acetyl-alpha-D-glucosamine: step 4/6. Hydrolyzes the pyrophosphate bond of UDP-2,3-diacylglucosamine to yield 2,3-diacylglucosamine 1-phosphate (lipid X) and UMP by catalyzing the attack of water at the alpha-P atom. Involved in the biosynthesis of lipid A, a phosphorylated glycolipid that anchors the lipopolysaccharide to the outer membrane of the cell. This is UDP-2,3-diacylglucosamine hydrolase from Xanthomonas oryzae pv. oryzae (strain MAFF 311018).